The primary structure comprises 230 residues: Uracil-DNA glycosylase (230 aa).

The active-site Proton acceptor is the aspartate 70.

Belongs to the uracil-DNA glycosylase (UDG) superfamily. UNG family.

It localises to the cytoplasm. It carries out the reaction Hydrolyzes single-stranded DNA or mismatched double-stranded DNA and polynucleotides, releasing free uracil.. Functionally, excises uracil residues from the DNA which can arise as a result of misincorporation of dUMP residues by DNA polymerase or due to deamination of cytosine. The polypeptide is Uracil-DNA glycosylase (Pseudomonas putida (strain ATCC 700007 / DSM 6899 / JCM 31910 / BCRC 17059 / LMG 24140 / F1)).